The primary structure comprises 106 residues: Transcription initiation factor IIA subunit 2 (106 aa).

It belongs to the TFIIA subunit 2 family. As to quaternary structure, TFIIA is a heterodimer of the large unprocessed subunit 1 and a small subunit gamma. It was originally believed to be a heterotrimer of an alpha, a beta and a gamma subunit.

The protein resides in the nucleus. Its function is as follows. TFIIA is a component of the transcription machinery of RNA polymerase II and plays an important role in transcriptional activation. TFIIA in a complex with TBP mediates transcriptional activity. In Arabidopsis thaliana (Mouse-ear cress), this protein is Transcription initiation factor IIA subunit 2 (TFIIA-S).